We begin with the raw amino-acid sequence, 254 residues long: Adenosylcobinamide-GDP ribazoletransferase (254 aa).

The next 6 membrane-spanning stretches (helical) occupy residues 28-48 (FRQT…IVAL), 62-81 (IGVY…IDGI), 109-129 (VGVG…LGVL), 138-158 (VTFI…ALLV), 179-199 (LSLF…PYLG), and 200-220 (ASPT…IKQW).

Belongs to the CobS family. It depends on Mg(2+) as a cofactor.

Its subcellular location is the cell membrane. It carries out the reaction alpha-ribazole + adenosylcob(III)inamide-GDP = adenosylcob(III)alamin + GMP + H(+). The catalysed reaction is alpha-ribazole 5'-phosphate + adenosylcob(III)inamide-GDP = adenosylcob(III)alamin 5'-phosphate + GMP + H(+). It functions in the pathway cofactor biosynthesis; adenosylcobalamin biosynthesis; adenosylcobalamin from cob(II)yrinate a,c-diamide: step 7/7. Its function is as follows. Joins adenosylcobinamide-GDP and alpha-ribazole to generate adenosylcobalamin (Ado-cobalamin). Also synthesizes adenosylcobalamin 5'-phosphate from adenosylcobinamide-GDP and alpha-ribazole 5'-phosphate. The sequence is that of Adenosylcobinamide-GDP ribazoletransferase from Haloquadratum walsbyi (strain DSM 16790 / HBSQ001).